We begin with the raw amino-acid sequence, 76 residues long: Adropin (76 aa).

The N-terminal stretch at 1-33 is a signal peptide; it reads MGAALSQGALIAIICNGLVGFLLLLLWVILCWA. Residues 41 to 76 form a disordered region; the sequence is IDSLSESSPNSSPGPCPEKAPPPQKPSHEGSYLLQP. A compositionally biased stretch (pro residues) spans 52–65; sequence SPGPCPEKAPPPQK.

The protein localises to the secreted. Its function is as follows. Involved in the regulation of glucose homeostasis and lipid metabolism. This Bos taurus (Bovine) protein is Adropin (ENHO).